Reading from the N-terminus, the 372-residue chain is Protein phosphatase Mn(2+)-dependent 1K (372 aa).

A mitochondrion-targeting transit peptide spans 1-29; the sequence is MLSAAFITLLRSGGNQVKKRVLLSSILLQ. Positions 46–61 are critical for association with the BCKDH complex; that stretch reads RCSRFDPDGSGQPATW. A PPM-type phosphatase domain is found at 94-346; it reads NVGCASLIGK…DNSTAVVVPF (253 aa). Mn(2+)-binding residues include Asp127 and Gly128. The residue at position 248 (Ser248) is a Phosphoserine. The Mn(2+) site is built by Asp298 and Asp337.

It belongs to the PP2C family. In terms of assembly, monomer. Interacts with E1 and E2 components of the branched-chain alpha-ketoacid dehydrogenase (BCKDH) complex; this interaction requires colocalization in mitochondria. Interacts with BCKDHA but not with BCKDHB of the E1 component. Interacts with the 24-meric E2 core composed of DBT monomers with a 24:1 stoichiometry; the N-terminal region (residues 49-61) of PPM1K and C-terminal linker of the lipoyl domain of DBT (residues 145-160) are critical for this interaction, whereas the lipoyl prosthetic group is dispensable. Competes with BCKDK for binding to the E2 core; this interaction is modulated by branched-chain alpha-keto acids. At steady state, BCKDH holoenzyme preferentially binds BCKDK and BCKDHA is phosphorylated. In response to high levels of branched-chain alpha-keto acids, the inhibitory BCKDK is replaced by activating PPM1K leading to BCKDHA dephosphorylation and BCAA degradation. Mn(2+) is required as a cofactor. As to expression, highly expressed in the heart, kidney, brain and liver and to a lesser extent in testis, lung, spleen and adipose tissue. Very low amount in muscle (at protein level). Also expressed in the thymus (at protein level) and the diaphragm. Significantly reduced in hypertrophied hearts.

The protein resides in the mitochondrion matrix. The enzyme catalyses O-phospho-L-seryl-[3-methyl-2-oxobutanoate dehydrogenase] + H2O = L-seryl-[3-methyl-2-oxobutanoate dehydrogenase] + phosphate. The catalysed reaction is O-phospho-L-seryl-[protein] + H2O = L-seryl-[protein] + phosphate. Its pathway is protein modification. In terms of biological role, serine/threonine-protein phosphatase component of macronutrients metabolism. Forms a functional kinase and phosphatase pair with BCKDK, serving as a metabolic regulatory node that coordinates branched-chain amino acids (BCAAs) with glucose and lipid metabolism via two distinct phosphoprotein targets: mitochondrial BCKDHA subunit of the branched-chain alpha-ketoacid dehydrogenase (BCKDH) complex and cytosolic ACLY, a lipogenic enzyme of Krebs cycle. At high levels of branched-chain ketoacids, dephosphorylates and activates mitochondrial BCKDH complex, a multisubunit complex consisting of three multimeric components each involved in different steps of BCAA catabolism: E1 composed of BCKDHA and BCKDHB, E2 core composed of DBT monomers, and E3 composed of DLD monomers. Tightly associates with the E2 component of BCKDH complex and dephosphorylates BCKDHA on Ser-334. Regulates the reversible phosphorylation of ACLY in response to changes in cellular carbohydrate abundance such as occurs during fasting to feeding metabolic transition. At fasting state, appears to dephosphorylate ACLY on Ser-455 and inactivate it. Refeeding stimulates MLXIPL/ChREBP transcription factor, leading to increased BCKDK to PPM1K expression ratio, phosphorylation and activation of ACLY that ultimately results in the generation of malonyl-CoA and oxaloacetate immediate substrates of de novo lipogenesis and gluconeogenesis, respectively. Recognizes phosphosites having SxS or RxxS motifs and strictly depends on Mn(2+) ions for the phosphatase activity. Regulates Ca(2+)-induced opening of mitochondrial transition pore and apoptotic cell death. This Mus musculus (Mouse) protein is Protein phosphatase Mn(2+)-dependent 1K.